A 142-amino-acid chain; its full sequence is Required for drug-induced death protein 1 (142 aa).

Disordered stretches follow at residues 1–32 and 46–66; these read MTVG…DEEA and EAAA…TRGA. The chain crosses the membrane as a helical span at residues 116–138; it reads VVIGLQGFAAAYSAPFAVATSVV.

Its subcellular location is the membrane. Functionally, regulates drug efflux through modulation of ABCB1 localization and activity. The sequence is that of Required for drug-induced death protein 1 from Homo sapiens (Human).